We begin with the raw amino-acid sequence, 920 residues long: Protein O-mannosyl-transferase TMTC3 (920 aa).

Residues 1–14 (MLEGKMADINFKEV) lie on the Cytoplasmic side of the membrane. A helical membrane pass occupies residues 15 to 35 (TLIVSVVAACYWNSLFCGFVF). Over 36–94 (DDVSAILDNKDLHPSTPLKTLFQNDFWGTPMSEERSHKSYRPLTVLTFRLNYLLSELKP) the chain is Extracellular. The chain crosses the membrane as a helical span at residues 95–115 (MSYHLLNTVFHAVVSVIFLKV). Over 116–125 (CRLFLDKRSS) the chain is Cytoplasmic. 2 helical membrane passes run 126 to 144 (MIAA…AVTG) and 145 to 163 (VVGR…AFLS). Over 164 to 171 (YTKSKGPD) the chain is Cytoplasmic. Residues 172 to 192 (NSIVWTPIVLTVFLVAVATLC) traverse the membrane as a helical segment. At 193–198 (KEQGIT) the chain is on the extracellular side. Residues 199-219 (VVGICCVYEVFVAQGYTLPML) form a helical membrane-spanning segment. Residues 220-236 (CTVAGQFLRGKGSIPLS) lie on the Cytoplasmic side of the membrane. Residues 237 to 257 (MLQTLVKLIVLMLSTLLLVVV) form a helical membrane-spanning segment. Residues 258–325 (RVQVIQSQLP…LIESFLDVRN (68 aa)) are Extracellular-facing. The helical transmembrane segment at 326–346 (LATFAFFCFLGALGIFSLRYP) threads the bilayer. Over 347-358 (GDSSKTVLMALC) the chain is Cytoplasmic. The helical transmembrane segment at 359-379 (LMALPFIPASNLFFPVGFVVA) threads the bilayer. Topologically, residues 380-381 (ER) are extracellular. The chain crosses the membrane as a helical span at residues 382 to 402 (VLYVPSMGFCILVAHGWQKIS). Over 403–409 (NKSVLKK) the chain is Cytoplasmic. A helical membrane pass occupies residues 410 to 428 (LSWVCLSMVILTHALKTLH). The Extracellular portion of the chain corresponds to 429 to 920 (RNWDWESEYT…EEIERILNGE (492 aa)). TPR repeat units lie at residues 451–484 (AKLW…QPDD), 485–518 (IGAH…MPQI), 534–567 (NVYI…RPDF), 568–601 (KQAY…DRNN), 602–635 (ADLW…NPKH), 673–706 (ANGY…QPDF), 707–740 (RSAL…YPDH), 742–775 (KGLI…DPSN), and 776–809 (VQGK…APHE). A glycan (N-linked (GlcNAc...) asparagine) is linked at Asn499. Tyr508 carries the post-translational modification Phosphotyrosine. The N-linked (GlcNAc...) asparagine glycan is linked to Asn546. Residues 829–897 (VEQPLAPADK…APHKTTKDIK (69 aa)) are disordered. The segment covering 840–858 (PGTEEREEIPSEDVKEISS) has biased composition (basic and acidic residues). The segment covering 867 to 880 (KTNNNRNSKSNKQS) has biased composition (low complexity). Basic and acidic residues predominate over residues 887 to 897 (DAPHKTTKDIK).

The protein belongs to the TMTC family.

The protein localises to the membrane. The protein resides in the endoplasmic reticulum. The catalysed reaction is a di-trans,poly-cis-dolichyl beta-D-mannosyl phosphate + L-seryl-[protein] = 3-O-(alpha-D-mannosyl)-L-seryl-[protein] + a di-trans,poly-cis-dolichyl phosphate + H(+). It catalyses the reaction a di-trans,poly-cis-dolichyl beta-D-mannosyl phosphate + L-threonyl-[protein] = 3-O-(alpha-D-mannosyl)-L-threonyl-[protein] + a di-trans,poly-cis-dolichyl phosphate + H(+). The protein operates within protein modification; protein glycosylation. In terms of biological role, transfers mannosyl residues to the hydroxyl group of serine or threonine residues. The 4 members of the TMTC family are O-mannosyl-transferases dedicated primarily to the cadherin superfamily, each member seems to have a distinct role in decorating the cadherin domains with O-linked mannose glycans at specific regions. Also acts as O-mannosyl-transferase on other proteins such as PDIA3. Involved in the positive regulation of proteasomal protein degradation in the endoplasmic reticulum (ER), and the control of ER stress response. The protein is Protein O-mannosyl-transferase TMTC3 of Mus musculus (Mouse).